The chain runs to 138 residues: Large ribosomal subunit protein bL12c (138 aa).

The protein belongs to the bacterial ribosomal protein bL12 family. Homodimer. Part of the ribosomal stalk of the 50S ribosomal subunit. Forms a multimeric L10(L12)X complex, where L10 forms an elongated spine to which 2 to 4 L12 dimers bind in a sequential fashion. Binds GTP-bound translation factors.

It localises to the plastid. Forms part of the ribosomal stalk which helps the ribosome interact with GTP-bound translation factors. Is thus essential for accurate translation. This Euglena longa (Euglenophycean alga) protein is Large ribosomal subunit protein bL12c.